Consider the following 508-residue polypeptide: MGKKKTSVVQSDELPVIEFRYAEPLFQFVCHPEEPMVVSALATGHVLCHRYDAELLTEKLREARKVQEAVKVEEKKQTLWTVVDVDAADKHPVLPSGVTLLWRTKRHKGSVRALAIDHDGKHVYTIGADNVLKKADTHSGKVVKKVTLDGGSKVTKLVKSATHDFLVMGDEVGTIVVLDSNDLTTKNTLTKIHGGDAINDIFQFCKRSVYKYISLGQTTLAYWDTREPKMKQPKKNSGNQTEEELSNIMCSDDQEDEILCGAFVDPIEGDTLVCGMGEGTLTVWKPKKNDLEDQLTRVKIAKGESIDTVISTLQDDNCVWCGCSNGLLYKVDTKRGKIVEIRKHSGLDEVGMLDLDFEYRLVSGGMDKLKIWEVPKEENSDSDSDSDINDDSEAGLSSSEDSDSDSELGSGSESEVESDASSKSDSDLEECTGSDLPGDIEGSEGENNSNDDDNHDDREELWKELDQPTSDEEEPPKKRSLKVKDKKNKKFKKNENNLSHGITKFDGL.

WD repeat units lie at residues 62–105, 106–145, 149–188, 193–233, 253–294, and 345–382; these read EARK…WRTK, RHKG…VVKK, DGGS…TKNT, HGGD…MKQP, DQED…LEDQ, and SGLD…NSDS. The segment at 376–508 is disordered; it reads KEENSDSDSD…SHGITKFDGL (133 aa). Positions 380–393 are enriched in acidic residues; it reads SDSDSDSDINDDSE. Over residues 407-419 the composition is skewed to low complexity; the sequence is ELGSGSESEVESD. Residues 431 to 472 form a WD 7 repeat; sequence CTGSDLPGDIEGSEGENNSNDDDNHDDREELWKELDQPTSDE. A compositionally biased stretch (acidic residues) spans 441-454; it reads EGSEGENNSNDDDN. The span at 455–466 shows a compositional bias: basic and acidic residues; that stretch reads HDDREELWKELD. The span at 478–492 shows a compositional bias: basic residues; that stretch reads KRSLKVKDKKNKKFK.

It belongs to the WD repeat WDR55 family.

It is found in the nucleus. The protein localises to the nucleolus. In Candida glabrata (strain ATCC 2001 / BCRC 20586 / JCM 3761 / NBRC 0622 / NRRL Y-65 / CBS 138) (Yeast), this protein is WD repeat-containing protein JIP5 (JIP5).